The chain runs to 187 residues: Adenylate kinase (187 aa).

10 to 15 (GSGKGT) provides a ligand contact to ATP. An NMP region spans residues 30 to 59 (STGDLLRSEVVAGTPLGLQAKQVMAQGDLV). AMP is bound by residues T31, R36, 57–59 (DLV), 85–88 (GYPR), and Q92. Residues 126 to 136 (GRAQAEGREDD) form an LID region. Position 127 (R127) interacts with ATP. AMP is bound by residues R133 and R144. G172 is an ATP binding site.

The protein belongs to the adenylate kinase family. As to quaternary structure, monomer.

Its subcellular location is the cytoplasm. The enzyme catalyses AMP + ATP = 2 ADP. The protein operates within purine metabolism; AMP biosynthesis via salvage pathway; AMP from ADP: step 1/1. Functionally, catalyzes the reversible transfer of the terminal phosphate group between ATP and AMP. Plays an important role in cellular energy homeostasis and in adenine nucleotide metabolism. The polypeptide is Adenylate kinase (Xylella fastidiosa (strain M12)).